The sequence spans 288 residues: Quinate/shikimate dehydrogenase (288 aa).

Lysine 71 and aspartate 107 together coordinate substrate. NAD(+) is bound by residues 132 to 135, 155 to 158, lysine 205, 232 to 235, and glycine 255; these read AGGA, NRRD, and CVYN.

It belongs to the shikimate dehydrogenase family. As to quaternary structure, homodimer.

It catalyses the reaction L-quinate + NAD(+) = 3-dehydroquinate + NADH + H(+). The catalysed reaction is L-quinate + NADP(+) = 3-dehydroquinate + NADPH + H(+). The enzyme catalyses shikimate + NADP(+) = 3-dehydroshikimate + NADPH + H(+). It carries out the reaction shikimate + NAD(+) = 3-dehydroshikimate + NADH + H(+). It functions in the pathway metabolic intermediate biosynthesis; chorismate biosynthesis; chorismate from D-erythrose 4-phosphate and phosphoenolpyruvate: step 4/7. Functionally, the actual biological function of YdiB remains unclear, nor is it known whether 3-dehydroshikimate or quinate represents the natural substrate. Catalyzes the reversible NAD-dependent reduction of both 3-dehydroshikimate (DHSA) and 3-dehydroquinate to yield shikimate (SA) and quinate, respectively. It can use both NAD or NADP for catalysis, however it has higher catalytic efficiency with NAD. This Shigella flexneri protein is Quinate/shikimate dehydrogenase.